The chain runs to 282 residues: Hydrogenase expression/formation protein HoxQ (282 aa).

This sequence belongs to the HupH/HyaF family.

In Cupriavidus necator (strain ATCC 17699 / DSM 428 / KCTC 22496 / NCIMB 10442 / H16 / Stanier 337) (Ralstonia eutropha), this protein is Hydrogenase expression/formation protein HoxQ (hoxQ).